A 264-amino-acid polypeptide reads, in one-letter code: MQINSIKIPLIELQNIKVVFGAKTALQNINLSIYPNTVITIVGPNGGGKSTLLKVLLKLLSPTDGKVIHHRDLRIGYVPQKIHLEQSLPITVEKFLSLKKGISKAEIQDAIELLSIKHLIHSSMQKLSGGEMQRVLLARALLNKPNLLVLDEPMQGVDLSGQIELYQLIHQTREKLNCAILMVSHDLHIVMADTNEVVCINRHICCAGSPEKVSNDPTFIHLFGDQFSQNVAFYTHHHNHQHNMHGDVCCIGNKHSVQCINNGR.

Residues 11-226 (IELQNIKVVF…PTFIHLFGDQ (216 aa)) enclose the ABC transporter domain. ATP is bound at residue 43-50 (GPNGGGKS).

This sequence belongs to the ABC transporter superfamily. Zinc importer (TC 3.A.1.15.5) family. As to quaternary structure, the complex is composed of two ATP-binding proteins (ZnuC), two transmembrane proteins (ZnuB) and a solute-binding protein (ZnuA).

Its subcellular location is the cell inner membrane. The enzyme catalyses Zn(2+)(out) + ATP(in) + H2O(in) = Zn(2+)(in) + ADP(in) + phosphate(in) + H(+)(in). Its function is as follows. Part of the ABC transporter complex ZnuABC involved in zinc import. Responsible for energy coupling to the transport system. In Mannheimia succiniciproducens (strain KCTC 0769BP / MBEL55E), this protein is Zinc import ATP-binding protein ZnuC.